Here is a 743-residue protein sequence, read N- to C-terminus: 1,4-alpha-glucan branching enzyme GlgB (743 aa).

The Nucleophile role is filled by D416. The Proton donor role is filled by E469.

The protein belongs to the glycosyl hydrolase 13 family. GlgB subfamily. In terms of assembly, monomer.

It catalyses the reaction Transfers a segment of a (1-&gt;4)-alpha-D-glucan chain to a primary hydroxy group in a similar glucan chain.. It functions in the pathway glycan biosynthesis; glycogen biosynthesis. In terms of biological role, catalyzes the formation of the alpha-1,6-glucosidic linkages in glycogen by scission of a 1,4-alpha-linked oligosaccharide from growing alpha-1,4-glucan chains and the subsequent attachment of the oligosaccharide to the alpha-1,6 position. The sequence is that of 1,4-alpha-glucan branching enzyme GlgB from Shewanella baltica (strain OS195).